The primary structure comprises 404 residues: Propionate kinase (404 aa).

The protein belongs to the acetokinase family. PduW subfamily.

Its subcellular location is the cytoplasm. It catalyses the reaction propanoate + ATP = propanoyl phosphate + ADP. Its pathway is polyol metabolism; 1,2-propanediol degradation. Its function is as follows. Works with phosphate acetyltransferase (pta) to capture exogenous propionate and regenerate propionyl-CoA during degradation of 1,2-propanediol (1,2-PD). In Escherichia fergusonii (strain ATCC 35469 / DSM 13698 / CCUG 18766 / IAM 14443 / JCM 21226 / LMG 7866 / NBRC 102419 / NCTC 12128 / CDC 0568-73), this protein is Propionate kinase.